Consider the following 207-residue polypeptide: Guanylate kinase (207 aa).

The Guanylate kinase-like domain maps to 4-184 (GTLYIVSAPS…ALADLHTIIR (181 aa)). 11-18 (APSGAGKS) contributes to the ATP binding site.

The protein belongs to the guanylate kinase family.

Its subcellular location is the cytoplasm. The enzyme catalyses GMP + ATP = GDP + ADP. In terms of biological role, essential for recycling GMP and indirectly, cGMP. The sequence is that of Guanylate kinase from Photorhabdus laumondii subsp. laumondii (strain DSM 15139 / CIP 105565 / TT01) (Photorhabdus luminescens subsp. laumondii).